A 133-amino-acid chain; its full sequence is Profilin Sal k 4.0201 (133 aa).

An intrachain disulfide couples cysteine 95 to cysteine 117.

Belongs to the profilin family. In terms of assembly, occurs in many kinds of cells as a complex with monomeric actin in a 1:1 ratio. As to expression, expressed in pollen (at protein and mRNA level).

The protein localises to the cytoplasm. It localises to the cytoskeleton. Binds to actin and affects the structure of the cytoskeleton. At high concentrations, profilin prevents the polymerization of actin, whereas it enhances it at low concentrations. This Kali turgidum (Prickly saltwort) protein is Profilin Sal k 4.0201.